The chain runs to 222 residues: Putative ankyrin repeat protein L36 (222 aa).

ANK repeat units follow at residues 1–14 (MVKY…NVDA), 15–44 (QNSR…NIYA), 45–74 (NDNH…NIRA), 76–104 (EDSA…TNYE), 105–134 (YSDY…KITD), 136–161 (AMFM…SLPC), and 163–191 (SYSE…KINK).

This Acanthamoeba polyphaga (Amoeba) protein is Putative ankyrin repeat protein L36.